Consider the following 339-residue polypeptide: UDP-3-O-acylglucosamine N-acyltransferase (339 aa).

Histidine 239 functions as the Proton acceptor in the catalytic mechanism.

Belongs to the transferase hexapeptide repeat family. LpxD subfamily. In terms of assembly, homotrimer.

It carries out the reaction a UDP-3-O-[(3R)-3-hydroxyacyl]-alpha-D-glucosamine + a (3R)-hydroxyacyl-[ACP] = a UDP-2-N,3-O-bis[(3R)-3-hydroxyacyl]-alpha-D-glucosamine + holo-[ACP] + H(+). It functions in the pathway bacterial outer membrane biogenesis; LPS lipid A biosynthesis. Functionally, catalyzes the N-acylation of UDP-3-O-acylglucosamine using 3-hydroxyacyl-ACP as the acyl donor. Is involved in the biosynthesis of lipid A, a phosphorylated glycolipid that anchors the lipopolysaccharide to the outer membrane of the cell. The polypeptide is UDP-3-O-acylglucosamine N-acyltransferase (Aliivibrio fischeri (strain ATCC 700601 / ES114) (Vibrio fischeri)).